A 182-amino-acid polypeptide reads, in one-letter code: Large ribosomal subunit protein uL5 (182 aa).

The protein belongs to the universal ribosomal protein uL5 family. In terms of assembly, part of the 50S ribosomal subunit; part of the 5S rRNA/L5/L18/L25 subcomplex. Contacts the 5S rRNA and the P site tRNA. Forms a bridge to the 30S subunit in the 70S ribosome.

This is one of the proteins that bind and probably mediate the attachment of the 5S RNA into the large ribosomal subunit, where it forms part of the central protuberance. In the 70S ribosome it contacts protein S13 of the 30S subunit (bridge B1b), connecting the 2 subunits; this bridge is implicated in subunit movement. Contacts the P site tRNA; the 5S rRNA and some of its associated proteins might help stabilize positioning of ribosome-bound tRNAs. The sequence is that of Large ribosomal subunit protein uL5 from Borreliella afzelii (strain PKo) (Borrelia afzelii).